A 235-amino-acid chain; its full sequence is Sugar fermentation stimulation protein homolog (235 aa).

It belongs to the SfsA family.

This chain is Sugar fermentation stimulation protein homolog, found in Aliivibrio fischeri (strain ATCC 700601 / ES114) (Vibrio fischeri).